The chain runs to 626 residues: Mitogen-activated protein kinase kinase kinase 3 (626 aa).

One can recognise a PB1 domain in the interval 44–123 (DVRIKFEHNG…KSLRILLLSQ (80 aa)). Disordered regions lie at residues 125–184 (RNHT…YVPE) and 218–273 (SSAE…VKGG). Composition is skewed to polar residues over residues 128 to 137 (TSSSPHSGVS), 144 to 155 (PSQSAGDINTIY), 165 to 174 (LSVSSQNPGR), and 219 to 247 (SAENSLSGSCQSLDRSADSPSFRKSQMSR). Serine 147 and serine 166 each carry phosphoserine. Phosphoserine is present on residues serine 250 and serine 312. Residues 250 to 270 (SFPDNRKECSDRETQLYDKGV) are compositionally biased toward basic and acidic residues. Serine 337 carries the phosphoserine; by SGK1 modification. Serine 340 bears the Phosphoserine mark. Positions 362 to 622 (WRRGKLLGQG…AEELLTHHFA (261 aa)) constitute a Protein kinase domain. ATP is bound by residues 368-376 (LGQGAFGRV) and lysine 391. The active-site Proton acceptor is aspartate 489.

The protein belongs to the protein kinase superfamily. STE Ser/Thr protein kinase family. MAP kinase kinase kinase subfamily. As to quaternary structure, binds both upstream activators and downstream substrates in multimolecular complexes. Part of a complex with MAP2K3, RAC1 and CCM2. Interacts with MAP2K5 and SPAG9. Mg(2+) is required as a cofactor. Phosphorylation at Ser-166 and Ser-337 by SGK1 inhibits its activity.

It carries out the reaction L-seryl-[protein] + ATP = O-phospho-L-seryl-[protein] + ADP + H(+). The enzyme catalyses L-threonyl-[protein] + ATP = O-phospho-L-threonyl-[protein] + ADP + H(+). Activated by phosphorylation on Thr-530. Functionally, component of a protein kinase signal transduction cascade. Mediates activation of the NF-kappa-B, AP1 and DDIT3 transcriptional regulators. The polypeptide is Mitogen-activated protein kinase kinase kinase 3 (Map3k3) (Mus musculus (Mouse)).